A 432-amino-acid chain; its full sequence is C2H2 type master regulator of conidiophore development brlA (432 aa).

Disordered regions lie at residues 22-72 (SNEC…RTPG) and 238-260 (KQHSPTTPIRSCSLGTGSGADTP). Residues 29 to 44 (TSSFSPLESPTPTPTS) are compositionally biased toward low complexity. Composition is skewed to polar residues over residues 62-72 (LPNNTYERTPG) and 238-252 (KQHSPTTPIRSCSLG). 2 consecutive C2H2-type zinc fingers follow at residues 320-344 (FKCKEPGCNGRFKRQEHLKRHMKSH) and 350-375 (HVCWVPGCHRAFSRSDNLNAHYTKTH). The tract at residues 388–432 (LDENSPDYDPEFRGQLTPDGRPIYGSKLDDPIPGAGDMSLDGWDE) is disordered.

Its subcellular location is the nucleus. Its function is as follows. BrlA, abaA and wetA are pivotal regulators of conidiophore development and conidium maturation. They act individually and together to regulate their own expression and that of numerous other sporulation-specific genes. Binds promoters of target genes at brlA response elements (BREs) containing the conserved sequence 5'-(C/A)(A/G)AGGG(G/A)-3'. Controls the expression of the conidiophore-specific phenol oxidase ivoB. Controls the expression of the hydrophobin rodA. Mediates the developmental switch from the indeterminate, apical growth pattern of vegetative cells to the budding growth pattern of conidiophores. Expression of brlA leads to activation of abaA, wetA and stuA, cessation of vegetative growth, cellular vacuolization and spore formation. The protein is C2H2 type master regulator of conidiophore development brlA of Emericella nidulans (strain FGSC A4 / ATCC 38163 / CBS 112.46 / NRRL 194 / M139) (Aspergillus nidulans).